Consider the following 496-residue polypeptide: Probable cytosol aminopeptidase (496 aa).

Residues Lys258 and Asp263 each contribute to the Mn(2+) site. Lys270 is a catalytic residue. Mn(2+) is bound by residues Asp281, Asp340, and Glu342. Arg344 is a catalytic residue.

It belongs to the peptidase M17 family. Mn(2+) is required as a cofactor.

The protein resides in the cytoplasm. It carries out the reaction Release of an N-terminal amino acid, Xaa-|-Yaa-, in which Xaa is preferably Leu, but may be other amino acids including Pro although not Arg or Lys, and Yaa may be Pro. Amino acid amides and methyl esters are also readily hydrolyzed, but rates on arylamides are exceedingly low.. The catalysed reaction is Release of an N-terminal amino acid, preferentially leucine, but not glutamic or aspartic acids.. Its function is as follows. Presumably involved in the processing and regular turnover of intracellular proteins. Catalyzes the removal of unsubstituted N-terminal amino acids from various peptides. In Helicobacter pylori (strain HPAG1), this protein is Probable cytosol aminopeptidase.